We begin with the raw amino-acid sequence, 116 residues long: MTRIKRGYIARRRRTKMHFFASSFRGAHSRLTRTMTQQEKRALVSAHRDRDRQKRDFRRLWITRINAVIRERGVSYSYSKFIHDLYKNQLLLNRKILAQIAISNRKCLDMISNEIV.

This sequence belongs to the bacterial ribosomal protein bL20 family.

It is found in the plastid. The protein resides in the chloroplast. Its function is as follows. Binds directly to 23S ribosomal RNA and is necessary for the in vitro assembly process of the 50S ribosomal subunit. It is not involved in the protein synthesizing functions of that subunit. This chain is Large ribosomal subunit protein bL20c, found in Ipomoea purpurea (Common morning glory).